We begin with the raw amino-acid sequence, 175 residues long: Adenine phosphoribosyltransferase (175 aa).

This sequence belongs to the purine/pyrimidine phosphoribosyltransferase family. Homodimer.

It is found in the cytoplasm. It catalyses the reaction AMP + diphosphate = 5-phospho-alpha-D-ribose 1-diphosphate + adenine. Its pathway is purine metabolism; AMP biosynthesis via salvage pathway; AMP from adenine: step 1/1. Functionally, catalyzes a salvage reaction resulting in the formation of AMP, that is energically less costly than de novo synthesis. This Synechococcus sp. (strain CC9902) protein is Adenine phosphoribosyltransferase.